The primary structure comprises 283 residues: Elongation factor Ts (283 aa).

Residues 80–83 (TDFV) are involved in Mg(2+) ion dislocation from EF-Tu.

This sequence belongs to the EF-Ts family.

The protein resides in the cytoplasm. Functionally, associates with the EF-Tu.GDP complex and induces the exchange of GDP to GTP. It remains bound to the aminoacyl-tRNA.EF-Tu.GTP complex up to the GTP hydrolysis stage on the ribosome. The protein is Elongation factor Ts of Erwinia tasmaniensis (strain DSM 17950 / CFBP 7177 / CIP 109463 / NCPPB 4357 / Et1/99).